Consider the following 236-residue polypeptide: 7-cyano-7-deazaguanine synthase (236 aa).

An ATP-binding site is contributed by 21-31; it reads LSGGLDSATVL. Zn(2+) is bound by residues Cys202, Cys212, Cys215, and Cys218.

Belongs to the QueC family. Requires Zn(2+) as cofactor.

It catalyses the reaction 7-carboxy-7-deazaguanine + NH4(+) + ATP = 7-cyano-7-deazaguanine + ADP + phosphate + H2O + H(+). The protein operates within purine metabolism; 7-cyano-7-deazaguanine biosynthesis. Catalyzes the ATP-dependent conversion of 7-carboxy-7-deazaguanine (CDG) to 7-cyano-7-deazaguanine (preQ(0)). The polypeptide is 7-cyano-7-deazaguanine synthase (Frankia casuarinae (strain DSM 45818 / CECT 9043 / HFP020203 / CcI3)).